We begin with the raw amino-acid sequence, 734 residues long: MAEKPVDSLSESEAEAELKRLAEEIAGHDRRYHAEDAPTITDAEYDALRRRNLAIEERFPGLVREDSPSRRVGAPPAEGFAKVRHAVPMLSLAKAYTDEDVTDFIERGRRFFDRDKDLDIAFTAEPKIDGLSASLRYENGVFVQGATRGDGAVGEDITANLRTIADIPAKLKGSGWPDVIEIRGEVYMTYAEFEALKARSAAAGGQDYVNPRNTAAGSLRQKDASVTASRNLKFFAYAWGFTTADPAPTQYESVQKFADWGFKISPLMVRAKSVEELVAQYHLIEEQRSSLGYDIDGVVYKVDQLELQRRWGFVTGEPRWAVAHKFPAEQAMTTVQKIDIQVGRTGTLAPVARLAPVTVGGVVVENVTLHNEDYIKGFDSNGLPIRDGIDVRIGDTVVIQRAGDVIPQIVSVVIDKRPADAVPYEFPHTCPVCGSPATREINEKTGKEDSRRRCTGELICAAQAVERLRHFVSRGALDIEGLGAENIDTFFNAGLIKTAADIFTLRDRRPAVTKALAERREEQARQREAASGKTRKNVRSVEDRNYEGLDKLFAAIDSRREPELDRFIFALGIRHIGETTAAVLAKTFSTIEELIRVGKETAAAEDPHTVFPSVNGIGDTVIDALCDFFGNERNDDVLDKLLEQVKPKPYIVTVSADSEVAGKTIVFTGTLEKMTRSEAKAMAERLGAKVAGSVSAKTDLLVAGPGAGSKLKLASELGVEVIDEDTWLQRVGKA.

NAD(+) is bound by residues 42–46 (DAEYD), 91–92 (SL), and glutamate 125. Lysine 127 serves as the catalytic N6-AMP-lysine intermediate. 4 residues coordinate NAD(+): arginine 148, glutamate 185, lysine 301, and lysine 325. 4 residues coordinate Zn(2+): cysteine 430, cysteine 433, cysteine 454, and cysteine 460. Residues 655-734 (SADSEVAGKT…DTWLQRVGKA (80 aa)) form the BRCT domain.

The protein belongs to the NAD-dependent DNA ligase family. LigA subfamily. Requires Mg(2+) as cofactor. It depends on Mn(2+) as a cofactor.

It catalyses the reaction NAD(+) + (deoxyribonucleotide)n-3'-hydroxyl + 5'-phospho-(deoxyribonucleotide)m = (deoxyribonucleotide)n+m + AMP + beta-nicotinamide D-nucleotide.. Its function is as follows. DNA ligase that catalyzes the formation of phosphodiester linkages between 5'-phosphoryl and 3'-hydroxyl groups in double-stranded DNA using NAD as a coenzyme and as the energy source for the reaction. It is essential for DNA replication and repair of damaged DNA. This chain is DNA ligase, found in Mesorhizobium japonicum (strain LMG 29417 / CECT 9101 / MAFF 303099) (Mesorhizobium loti (strain MAFF 303099)).